The primary structure comprises 294 residues: Phosphatidylserine decarboxylase proenzyme (294 aa).

Catalysis depends on charge relay system; for autoendoproteolytic cleavage activity residues Asp113, His169, and Ser256. Ser256 serves as the catalytic Schiff-base intermediate with substrate; via pyruvic acid; for decarboxylase activity. Ser256 is subject to Pyruvic acid (Ser); by autocatalysis.

It belongs to the phosphatidylserine decarboxylase family. PSD-B subfamily. Prokaryotic type II sub-subfamily. In terms of assembly, heterodimer of a large membrane-associated beta subunit and a small pyruvoyl-containing alpha subunit. Requires pyruvate as cofactor. Is synthesized initially as an inactive proenzyme. Formation of the active enzyme involves a self-maturation process in which the active site pyruvoyl group is generated from an internal serine residue via an autocatalytic post-translational modification. Two non-identical subunits are generated from the proenzyme in this reaction, and the pyruvate is formed at the N-terminus of the alpha chain, which is derived from the carboxyl end of the proenzyme. The autoendoproteolytic cleavage occurs by a canonical serine protease mechanism, in which the side chain hydroxyl group of the serine supplies its oxygen atom to form the C-terminus of the beta chain, while the remainder of the serine residue undergoes an oxidative deamination to produce ammonia and the pyruvoyl prosthetic group on the alpha chain. During this reaction, the Ser that is part of the protease active site of the proenzyme becomes the pyruvoyl prosthetic group, which constitutes an essential element of the active site of the mature decarboxylase.

It localises to the cell membrane. It catalyses the reaction a 1,2-diacyl-sn-glycero-3-phospho-L-serine + H(+) = a 1,2-diacyl-sn-glycero-3-phosphoethanolamine + CO2. The protein operates within phospholipid metabolism; phosphatidylethanolamine biosynthesis; phosphatidylethanolamine from CDP-diacylglycerol: step 2/2. Catalyzes the formation of phosphatidylethanolamine (PtdEtn) from phosphatidylserine (PtdSer). The chain is Phosphatidylserine decarboxylase proenzyme from Clostridium perfringens (strain SM101 / Type A).